Consider the following 60-residue polypeptide: UPF0337 protein SACOL1680 (60 aa).

This sequence belongs to the UPF0337 (CsbD) family.

The polypeptide is UPF0337 protein SACOL1680 (Staphylococcus aureus (strain COL)).